Reading from the N-terminus, the 633-residue chain is ATP-dependent clpX-like chaperone, mitochondrial (633 aa).

Residues 1–56 (MSSCGACTCGAAAARLLTTSLTSAQRGISCGRIHVPVLGRLGTLDTQILRRAPLRT) constitute a mitochondrion transit peptide. Residues 65–101 (ASKDGTNKDGSGDGNKKSVTEGSSKKSGSGNSGKGGN) form a disordered region. Residues 69–83 (GTNKDGSGDGNKKSV) are compositionally biased toward basic and acidic residues. The segment covering 84-93 (TEGSSKKSGS) has biased composition (low complexity). A ClpX-type ZB domain is found at 93–146 (SGNSGKGGNQLRCPKCGDLCTHVETFVSSTRFVKCEKCHHFFVVLSEADSKKSI). Zn(2+) contacts are provided by Cys105, Cys108, Cys127, and Cys130. 294–301 (PTGSGKTL) lines the ATP pocket. Residue Lys437 is modified to N6-acetyllysine. Residues 598–610 (KEPGYIRAPSKES) are compositionally biased toward basic and acidic residues. The disordered stretch occupies residues 598 to 633 (KEPGYIRAPSKESSEEDYDSGVEEDGWPRQADAANS). Residues 611-622 (SEEDYDSGVEED) show a composition bias toward acidic residues. At Ser617 the chain carries Phosphoserine.

This sequence belongs to the ClpX chaperone family. Homohexamer that forms a ring structure; this hexamerization requires ATP binding. Component of the ClpXP complex formed by the assembly of two CLPP heptameric rings with two CLPX hexameric rings, giving rise to a symmetrical structure with two central CLPP rings flanked by a CLPX ring at either end of the complex. Interacts with TFAM.

It is found in the mitochondrion. It localises to the mitochondrion matrix. Its subcellular location is the mitochondrion nucleoid. It catalyses the reaction ATP + H2O = ADP + phosphate + H(+). In terms of biological role, ATP-dependent chaperone that functions as an unfoldase. As part of the ClpXP protease complex, it recognizes specific protein substrates, unfolds them using energy derived from ATP hydrolysis, and then translocates them to the proteolytic subunit (CLPP) of the ClpXP complex for degradation. Thanks to its chaperone activity, it also functions in the incorporation of the pyridoxal phosphate cofactor into 5-aminolevulinate synthase, thereby activating 5-aminolevulinate (ALA) synthesis, the first step in heme biosynthesis. This chaperone is also involved in the control of mtDNA nucleoid distribution, by regulating mitochondrial transcription factor A (TFAM) activity. This chain is ATP-dependent clpX-like chaperone, mitochondrial, found in Rattus norvegicus (Rat).